A 553-amino-acid polypeptide reads, in one-letter code: Effector protein HopAB2 (553 aa).

3 disordered regions span residues 1 to 123 (MAGI…APRR), 198 to 227 (AVHQQAASAPVRSPTPTPASPAASSSGSSQ), and 239 to 275 (APNQGRSSNTAASQTPVDRSPPRVNQRPIRVDRAAMR). The host recognition; Pto interaction stretch occupies residues 1–308 (MAGINRAGPS…LRTALERHVM (308 aa)). Low complexity predominate over residues 24 to 39 (SGQAHGSGSGASSSNS). Over residues 47–60 (SNTPPSNAPAPPPT) the composition is skewed to pro residues. Positions 217 to 227 (SPAASSSGSSQ) are enriched in low complexity. Residues 242–255 (QGRSSNTAASQTPV) are compositionally biased toward polar residues. The segment at 309-553 (QRLPIPLDIG…IAKYAFRIVP (245 aa)) is E3 ubiquitin-protein ligase. Residues 325–328 (GINP) carry the Interaction with Pto-kinase motif. Positions 361 to 380 (APRPAVPVAPATASRRPDGT) are disordered. A required for E3 ubiquitin-protein ligase and anti-PCD activities and pathogenesis region spans residues 512 to 529 (KDLAFMDMKKLAQFLAGK).

Belongs to the HopAB family. Interacts physically with plant cell Pto. In terms of processing, auto-ubiquitinated.

The protein localises to the secreted. Its function is as follows. Effector protein involved in gene-for-gene resistance in tomato plants. It is recognized by the host Pto resistance protein and elicits Pto and Prf-dependent hypersensitive response (HR) and programmed cell death (PCD), resulting in host immunity. In susceptible plants, acts as a virulence factor by suppressing PCD and HR-based plant immunity. This function requires its E3 ubiquitin ligase activity probably by recruiting E2 enzymes and transferring ubiquitin molecules to cellular proteins involved in regulation of PCD and targeting them for degradation. Also, induces expression of host genes involved in ethylene biosynthesis and signaling, in particular ACO1 and ACO2, encoding the ethylene-forming enzyme ACC oxidase. This is Effector protein HopAB2 (hopAB2) from Pseudomonas syringae pv. tomato (strain ATCC BAA-871 / DC3000).